Reading from the N-terminus, the 56-residue chain is Meucin-25 (56 aa).

Residues 1–31 (MFRIEYSLVQLLLRNVTIPLLLIIQMHIMSS) form the signal peptide.

Belongs to the non-disulfide-bridged peptide (NDBP) superfamily. Antimalarial peptide (group 5) family. In terms of tissue distribution, expressed by the venom gland.

Its subcellular location is the secreted. This synthetic cationic peptide inhibits the development of Plasmodium berghei ookinetes, kills intraerythrocytic P.falciparum, and is cytotoxic to the Drosophila S2 cell at micromolar concentrations. No antibacterial, antifungal and hemolytic activities have been found at micromolar concentrations. In Mesobuthus eupeus (Lesser Asian scorpion), this protein is Meucin-25.